Consider the following 555-residue polypeptide: Energy-dependent translational throttle protein EttA (555 aa).

2 consecutive ABC transporter domains span residues 6-259 and 324-550; these read YTMH…AQEA and LEVS…RIKY. 39–46 contributes to the ATP binding site; the sequence is GLNGAGKS. An arm region spans residues 95 to 139; the sequence is SEVVNALKRLDEVYALYADPDADFDKLAAEQGRLEEIIQAHDGHN. The segment at 242 to 322 is ptIM; that stretch reads GNYSSWLEQK…IPPGPRLGDK (81 aa). Position 356-363 (356-363) interacts with ATP; the sequence is GPNGAGKS.

The protein belongs to the ABC transporter superfamily. ABCF family. Translational throttle EttA subfamily. As to quaternary structure, monomer. Probably contacts ribosomal proteins L1, L5, L33 and S7, the 16S and 23S rRNA and the P-site containing tRNA(fMet).

The protein localises to the cytoplasm. It carries out the reaction ATP + H2O = ADP + phosphate + H(+). Functionally, a translation factor that gates the progression of the 70S ribosomal initiation complex (IC, containing tRNA(fMet) in the P-site) into the translation elongation cycle by using a mechanism sensitive to the ATP/ADP ratio. Binds to the 70S ribosome E-site where it modulates the state of the translating ribosome during subunit translocation. ATP hydrolysis probably frees it from the ribosome, which can enter the elongation phase. The polypeptide is Energy-dependent translational throttle protein EttA (Escherichia coli O6:H1 (strain CFT073 / ATCC 700928 / UPEC)).